The chain runs to 269 residues: MKMNLMKMMMNNDNNNKLLNKVMMINNNNNNKLSNKVNTKQLNNNNQWSMMMYNYNKNNELNNIMNNNMMIQLLYKMMNMVNGNKMFISKPQFKININSVVIKFYYYNMNNNNNHNEINNMMMRLSKVLSYYYNKEVMIKPIKMSYVYMDSNIFTDYIMYLLTNNNNMNMDKIMNSYMNMFSNIMPLNINNQDKNVKYLSGWSIMLKGKLSDGRSKMTKMMYGSFNNNNKNYDLNNMPNNMYKGSVNPLNLNINKDGKYNIKVKLNYNK.

The protein belongs to the universal ribosomal protein uS3 family.

The protein resides in the mitochondrion. In terms of biological role, essential for mitochondrial protein synthesis and required for the maturation of small ribosomal subunits. This Monosporozyma servazzii (Yeast) protein is Small ribosomal subunit protein uS3m (VAR1).